The primary structure comprises 874 residues: Alanine--tRNA ligase (874 aa).

Zn(2+) contacts are provided by His562, His566, Cys664, and His668.

It belongs to the class-II aminoacyl-tRNA synthetase family. Requires Zn(2+) as cofactor.

Its subcellular location is the cytoplasm. The enzyme catalyses tRNA(Ala) + L-alanine + ATP = L-alanyl-tRNA(Ala) + AMP + diphosphate. Catalyzes the attachment of alanine to tRNA(Ala) in a two-step reaction: alanine is first activated by ATP to form Ala-AMP and then transferred to the acceptor end of tRNA(Ala). Also edits incorrectly charged Ser-tRNA(Ala) and Gly-tRNA(Ala) via its editing domain. The sequence is that of Alanine--tRNA ligase from Shewanella oneidensis (strain ATCC 700550 / JCM 31522 / CIP 106686 / LMG 19005 / NCIMB 14063 / MR-1).